Consider the following 460-residue polypeptide: Cysteine--tRNA ligase (460 aa).

Cys29 lines the Zn(2+) pocket. The 'HIGH' region motif lies at 31-41 (PTVYDFAHIGN). Positions 227, 252, and 256 each coordinate Zn(2+). The short motif at 285-289 (KMSKS) is the 'KMSKS' region element. Residue Lys288 coordinates ATP.

The protein belongs to the class-I aminoacyl-tRNA synthetase family. In terms of assembly, monomer. Zn(2+) serves as cofactor.

It is found in the cytoplasm. The catalysed reaction is tRNA(Cys) + L-cysteine + ATP = L-cysteinyl-tRNA(Cys) + AMP + diphosphate. This Bradyrhizobium diazoefficiens (strain JCM 10833 / BCRC 13528 / IAM 13628 / NBRC 14792 / USDA 110) protein is Cysteine--tRNA ligase.